The following is a 314-amino-acid chain: tRNA dimethylallyltransferase (314 aa).

12 to 19 (GPTGTGKS) is an ATP binding site. Residue 14-19 (TGTGKS) participates in substrate binding.

Belongs to the IPP transferase family. Monomer. It depends on Mg(2+) as a cofactor.

The catalysed reaction is adenosine(37) in tRNA + dimethylallyl diphosphate = N(6)-dimethylallyladenosine(37) in tRNA + diphosphate. In terms of biological role, catalyzes the transfer of a dimethylallyl group onto the adenine at position 37 in tRNAs that read codons beginning with uridine, leading to the formation of N6-(dimethylallyl)adenosine (i(6)A). The chain is tRNA dimethylallyltransferase from Mycolicibacterium paratuberculosis (strain ATCC BAA-968 / K-10) (Mycobacterium paratuberculosis).